Reading from the N-terminus, the 973-residue chain is E3 ubiquitin-protein ligase MIB2 (973 aa).

Positions 1-80 (MDLDPHAGVQ…AHDLLLYDNA (80 aa)) constitute an MIB/HERC2 1 domain. The segment at 86 to 138 (HPNIICDCCKKHGLRGMRWKCRVCFDYDLCTQCYMHNKHDLTHAFERYETSHS) adopts a ZZ-type zinc-finger fold. Positions 91, 94, 106, 109, 115, 118, 124, and 128 each coordinate Zn(2+). Residues 149-227 (LPRIPLRGIF…KVDLRCVGEA (79 aa)) form the MIB/HERC2 2 domain. Position 251 is a phosphoserine (Ser251). ANK repeat units lie at residues 480-509 (QGRT…SMDL), 513-542 (EGNT…AVDA), 546-575 (TRST…DVNL), 579-611 (HADT…DVTA), 615-644 (QGFT…QLVD), 649-679 (DGFT…DVNV), 683-712 (KLQS…SVNT), 716-744 (EGDT…DPGP), and 785-814 (RGRS…ERQA). 2 consecutive RING-type zinc fingers follow at residues 850-885 (CLVC…IRCQ) and 929-962 (CPIC…PICR).

Interacts with actin monomer. In terms of processing, ubiquitinated. Possibly via autoubiquitination. In terms of tissue distribution, highly expressed in brain, heart, liver and kidney.

The protein resides in the cytoplasm. Its subcellular location is the endosome. It carries out the reaction S-ubiquitinyl-[E2 ubiquitin-conjugating enzyme]-L-cysteine + [acceptor protein]-L-lysine = [E2 ubiquitin-conjugating enzyme]-L-cysteine + N(6)-ubiquitinyl-[acceptor protein]-L-lysine.. The protein operates within protein modification; protein ubiquitination. In terms of biological role, E3 ubiquitin-protein ligase that mediates ubiquitination of Delta receptors, which act as ligands of Notch proteins. Positively regulates the Delta-mediated Notch signaling by ubiquitinating the intracellular domain of Delta, leading to endocytosis of Delta receptors. In Mus musculus (Mouse), this protein is E3 ubiquitin-protein ligase MIB2 (Mib2).